The sequence spans 226 residues: Putative mitochondrial outer membrane protein porin 5 (226 aa).

This sequence belongs to the eukaryotic mitochondrial porin (TC 1.B.8.1) family.

Its subcellular location is the mitochondrion outer membrane. Functionally, putative channel that allows diffusion of small hydrophilic molecules through membranes. In Arabidopsis thaliana (Mouse-ear cress), this protein is Putative mitochondrial outer membrane protein porin 5 (VDAC5).